We begin with the raw amino-acid sequence, 81 residues long: Sulfur carrier protein TusA (81 aa).

C19 acts as the Cysteine persulfide intermediate in catalysis.

The protein belongs to the sulfur carrier protein TusA family. As to quaternary structure, interacts with IscS.

It is found in the cytoplasm. It functions in the pathway tRNA modification. Its function is as follows. Sulfur carrier protein involved in sulfur trafficking in the cell. Part of a sulfur-relay system required for 2-thiolation during synthesis of 2-thiouridine of the modified wobble base 5-methylaminomethyl-2-thiouridine (mnm(5)s(2)U) in tRNA. Interacts with IscS and stimulates its cysteine desulfurase activity. Accepts an activated sulfur from IscS, which is then transferred to TusD, and thus determines the direction of sulfur flow from IscS to 2-thiouridine formation. Also appears to be involved in sulfur transfer for the biosynthesis of molybdopterin. The sequence is that of Sulfur carrier protein TusA from Pectobacterium atrosepticum (strain SCRI 1043 / ATCC BAA-672) (Erwinia carotovora subsp. atroseptica).